We begin with the raw amino-acid sequence, 150 residues long: Cell division protein SepF (150 aa).

Belongs to the SepF family. Homodimer. Interacts with FtsZ.

The protein resides in the cytoplasm. Functionally, cell division protein that is part of the divisome complex and is recruited early to the Z-ring. Probably stimulates Z-ring formation, perhaps through the cross-linking of FtsZ protofilaments. Its function overlaps with FtsA. This is Cell division protein SepF from Clostridium beijerinckii (strain ATCC 51743 / NCIMB 8052) (Clostridium acetobutylicum).